The primary structure comprises 352 residues: Rhodopsin (352 aa).

Residues 1–36 (MNGTEGPDFYIPFSNKTGVVRSPFEYPQYYLAEPWK) lie on the Extracellular side of the membrane. Asn-2 and Asn-15 each carry an N-linked (GlcNAc...) asparagine glycan. A helical membrane pass occupies residues 37-61 (YSALAAYMFMLIILGFPINFLTLYV). The Cytoplasmic portion of the chain corresponds to 62–73 (TVQHKKLRSPLN). Residues 74–96 (YILLNLAVADLFMVLGGFTTTLY) form a helical membrane-spanning segment. Residues 97–110 (TSMNGYFVFGVTGC) are Extracellular-facing. A disulfide bridge links Cys-110 with Cys-187. Residues 111–133 (YFEGFFATLGGEVALWCLVVLAI) form a helical membrane-spanning segment. Residues 134-136 (ERY) carry the 'Ionic lock' involved in activated form stabilization motif. At 134–152 (ERYIVVCKPMSNFRFGENH) the chain is on the cytoplasmic side. Residues 153 to 173 (AIMGVVFTWIMALTCAAPPLV) form a helical membrane-spanning segment. At 174–202 (GWSRYIPEGMQCSCGVDYYTLKPEVNNES) the chain is on the extracellular side. A helical transmembrane segment spans residues 203 to 224 (FVIYMFVVHFAIPLAVIFFCYG). Residues 225 to 252 (RLVCTVKEAAAQQQESATTQKAEKEVTR) lie on the Cytoplasmic side of the membrane. The chain crosses the membrane as a helical span at residues 253–274 (MVIIMVVSFLICWVPYASVAFY). The Extracellular portion of the chain corresponds to 275 to 286 (IFSNQGSDFGPV). The chain crosses the membrane as a helical span at residues 287–308 (FMTIPAFFAKSSAIYNPVIYIV). Position 296 is an N6-(retinylidene)lysine (Lys-296). Topologically, residues 309-352 (MNKQFRNCMITTLCCGKNPLGDDETATGSKTETSSVSTSQVSPA) are cytoplasmic. 2 S-palmitoyl cysteine lipidation sites follow: Cys-322 and Cys-323. Residues 332-352 (ETATGSKTETSSVSTSQVSPA) form a disordered region. Residues 335–352 (TGSKTETSSVSTSQVSPA) are compositionally biased toward low complexity.

Belongs to the G-protein coupled receptor 1 family. Opsin subfamily. Contains one covalently linked retinal chromophore. Upon light absorption, the covalently bound 11-cis-retinal is converted to all-trans-retinal. After hydrolysis of the Schiff base and release of the covalently bound all-trans-retinal, active rhodopsin is regenerated by binding of a fresh molecule of 11-cis-retinal. Expressed in rod-shaped photoreceptor cells in the retina that mediate vision in dim ligh (at protein level).

Its subcellular location is the membrane. It localises to the cell projection. The protein localises to the cilium. It is found in the photoreceptor outer segment. In terms of biological role, photoreceptor required for image-forming vision at low light intensity. Required for photoreceptor cell viability after birth. Light-induced isomerization of 11-cis to all-trans retinal triggers a conformational change that activates signaling via G-proteins. Subsequent receptor phosphorylation mediates displacement of the bound G-protein alpha subunit by arrestin and terminates signaling. In Alligator mississippiensis (American alligator), this protein is Rhodopsin (RHO).